The primary structure comprises 314 residues: tRNA dimethylallyltransferase (314 aa).

Residue 12–19 participates in ATP binding; sequence GPTASGKT. Residue 14–19 coordinates substrate; the sequence is TASGKT. 4 interaction with substrate tRNA regions span residues 37–40, 161–165, 242–247, and 275–282; these read DSAL, QRINR, RCVGYR, and KRQITWLR.

This sequence belongs to the IPP transferase family. As to quaternary structure, monomer. The cofactor is Mg(2+).

It carries out the reaction adenosine(37) in tRNA + dimethylallyl diphosphate = N(6)-dimethylallyladenosine(37) in tRNA + diphosphate. In terms of biological role, catalyzes the transfer of a dimethylallyl group onto the adenine at position 37 in tRNAs that read codons beginning with uridine, leading to the formation of N6-(dimethylallyl)adenosine (i(6)A). The polypeptide is tRNA dimethylallyltransferase (Mannheimia succiniciproducens (strain KCTC 0769BP / MBEL55E)).